Here is a 900-residue protein sequence, read N- to C-terminus: Bifunctional uridylyltransferase/uridylyl-removing enzyme (900 aa).

Positions 1 to 342 (MPQVDPELFD…PCEQPVQIQP (342 aa)) are uridylyltransferase. Residues 343-705 (LNSRFQLRDG…TTQREFESGS (363 aa)) form a uridylyl-removing region. The HD domain maps to 461-583 (VDAHTLNLIK…VGDQTHLDYL (123 aa)). ACT domains are found at residues 706 to 789 (QIFI…IIQR) and 816 to 891 (VLEV…DNGR).

This sequence belongs to the GlnD family. It depends on Mg(2+) as a cofactor.

The enzyme catalyses [protein-PII]-L-tyrosine + UTP = [protein-PII]-uridylyl-L-tyrosine + diphosphate. It carries out the reaction [protein-PII]-uridylyl-L-tyrosine + H2O = [protein-PII]-L-tyrosine + UMP + H(+). Uridylyltransferase (UTase) activity is inhibited by glutamine, while glutamine activates uridylyl-removing (UR) activity. Modifies, by uridylylation and deuridylylation, the PII regulatory proteins (GlnB and homologs), in response to the nitrogen status of the cell that GlnD senses through the glutamine level. Under low glutamine levels, catalyzes the conversion of the PII proteins and UTP to PII-UMP and PPi, while under higher glutamine levels, GlnD hydrolyzes PII-UMP to PII and UMP (deuridylylation). Thus, controls uridylylation state and activity of the PII proteins, and plays an important role in the regulation of nitrogen assimilation and metabolism. The protein is Bifunctional uridylyltransferase/uridylyl-removing enzyme of Pseudomonas aeruginosa (strain UCBPP-PA14).